Reading from the N-terminus, the 121-residue chain is MARIAGVDLPRDKRIVIGLTYIFGIGDSTAKKILENAGVSEDIRVRDLTPDQEEKIRAQVDQIQVEGDLRREVSMNIKRLQEIGSYRGMRHRRGLPVRGQHTKNNARTRKGKAVAIANKKK.

The disordered stretch occupies residues 88–121 (GMRHRRGLPVRGQHTKNNARTRKGKAVAIANKKK).

It belongs to the universal ribosomal protein uS13 family. Part of the 30S ribosomal subunit. Forms a loose heterodimer with protein S19. Forms two bridges to the 50S subunit in the 70S ribosome.

Its function is as follows. Located at the top of the head of the 30S subunit, it contacts several helices of the 16S rRNA. In the 70S ribosome it contacts the 23S rRNA (bridge B1a) and protein L5 of the 50S subunit (bridge B1b), connecting the 2 subunits; these bridges are implicated in subunit movement. Contacts the tRNAs in the A and P-sites. The chain is Small ribosomal subunit protein uS13 from Limosilactobacillus reuteri subsp. reuteri (strain JCM 1112) (Lactobacillus reuteri).